We begin with the raw amino-acid sequence, 609 residues long: MSALTTSQLATSATGFGIADRSAPSSLLRHGFQGLKPRSPAGGDATSLSVTTSARATPKQQRSVQRGSRRFPSVVVYATGAGMNVVFVGAEMAPWSKTGGLGDVLGGLPPAMAANGHRVMVISPRYDQYKDAWDTSVVAEIKVADRYERVRFFHCYKRGVDRVFIDHPSFLEKVWGKTGEKIYGPDTGVDYKDNQMRFSLLCQAALEAPRILNLNNNPYFKGTYGEDVVFVCNDWHTGPLASYLKNNYQPNGIYRNAKVAFCIHNISYQGRFAFEDYPELNLSERFRSSFDFIDGYDTPVEGRKINWMKAGILEADRVLTVSPYYAEELISGIARGCELDNIMRLTGITGIVNGMDVSEWDPSKDKYITAKYDATTAIEAKALNKEALQAEAGLPVDRKIPLIAFIGRLEEQKGPDVMAAAIPELMQEDVQIVLLGTGKKKFEKLLKSMEEKYPGKVRAVVKFNAPLAHLIMAGADVLAVPSRFEPCGLIQLQGMRYGTPCACASTGGLVDTVIEGKTGFHMGRLSVNCKVVEPSDVKKVAATLKRAIKVVGTPAYEEMVRNCMNQDLSWKGPAKNWENVLLGLGVAGSAPGIEGDEIAPLAKENVAAP.

A chloroplast-targeting transit peptide spans 1-77 (MSALTTSQLA…SRRFPSVVVY (77 aa)). Residues 29 to 67 (RHGFQGLKPRSPAGGDATSLSVTTSARATPKQQRSVQRG) are disordered. Positions 46–66 (TSLSVTTSARATPKQQRSVQR) are enriched in polar residues. An ADP-alpha-D-glucose-binding site is contributed by K97.

It belongs to the glycosyltransferase 1 family. Bacterial/plant glycogen synthase subfamily.

The protein localises to the plastid. Its subcellular location is the chloroplast. It is found in the amyloplast. It catalyses the reaction an NDP-alpha-D-glucose + [(1-&gt;4)-alpha-D-glucosyl](n) = [(1-&gt;4)-alpha-D-glucosyl](n+1) + a ribonucleoside 5'-diphosphate + H(+). Its pathway is glycan biosynthesis; starch biosynthesis. In terms of biological role, required for the synthesis of amylose in endosperm. The polypeptide is Granule-bound starch synthase 1, chloroplastic/amyloplastic (WAXY) (Oryza glaberrima (African rice)).